The following is a 62-amino-acid chain: Photosystem II reaction center protein Z (62 aa).

A run of 2 helical transmembrane segments spans residues 8-28 (ALAALVALSFLMVIGVPVAYA) and 41-61 (FVGSIAWTVLVIAVGVLNFFV).

This sequence belongs to the PsbZ family. As to quaternary structure, PSII is composed of 1 copy each of membrane proteins PsbA, PsbB, PsbC, PsbD, PsbE, PsbF, PsbH, PsbI, PsbJ, PsbK, PsbL, PsbM, PsbT, PsbX, PsbY, PsbZ, Psb30/Ycf12, peripheral proteins PsbO, CyanoQ (PsbQ), PsbU, PsbV and a large number of cofactors. It forms dimeric complexes.

The protein localises to the cellular thylakoid membrane. Functionally, may control the interaction of photosystem II (PSII) cores with the light-harvesting antenna, regulates electron flow through the 2 photosystem reaction centers. PSII is a light-driven water plastoquinone oxidoreductase, using light energy to abstract electrons from H(2)O, generating a proton gradient subsequently used for ATP formation. This chain is Photosystem II reaction center protein Z, found in Picosynechococcus sp. (strain ATCC 27264 / PCC 7002 / PR-6) (Agmenellum quadruplicatum).